Here is a 193-residue protein sequence, read N- to C-terminus: Crossover junction endodeoxyribonuclease RuvC (193 aa).

Active-site residues include aspartate 7, glutamate 68, and aspartate 141. Mg(2+) is bound by residues aspartate 7, glutamate 68, and aspartate 141. The segment at 174 to 193 (RQWAQATQHATRRRGVRRGM) is disordered. The segment covering 183-193 (ATRRRGVRRGM) has biased composition (basic residues).

The protein belongs to the RuvC family. As to quaternary structure, homodimer which binds Holliday junction (HJ) DNA. The HJ becomes 2-fold symmetrical on binding to RuvC with unstacked arms; it has a different conformation from HJ DNA in complex with RuvA. In the full resolvosome a probable DNA-RuvA(4)-RuvB(12)-RuvC(2) complex forms which resolves the HJ. Requires Mg(2+) as cofactor.

The protein resides in the cytoplasm. The catalysed reaction is Endonucleolytic cleavage at a junction such as a reciprocal single-stranded crossover between two homologous DNA duplexes (Holliday junction).. Functionally, the RuvA-RuvB-RuvC complex processes Holliday junction (HJ) DNA during genetic recombination and DNA repair. Endonuclease that resolves HJ intermediates. Cleaves cruciform DNA by making single-stranded nicks across the HJ at symmetrical positions within the homologous arms, yielding a 5'-phosphate and a 3'-hydroxyl group; requires a central core of homology in the junction. The consensus cleavage sequence is 5'-(A/T)TT(C/G)-3'. Cleavage occurs on the 3'-side of the TT dinucleotide at the point of strand exchange. HJ branch migration catalyzed by RuvA-RuvB allows RuvC to scan DNA until it finds its consensus sequence, where it cleaves and resolves the cruciform DNA. The protein is Crossover junction endodeoxyribonuclease RuvC of Bifidobacterium animalis subsp. lactis (strain AD011).